A 957-amino-acid chain; its full sequence is Glycine dehydrogenase (decarboxylating) 2 (957 aa).

Lys707 carries the post-translational modification N6-(pyridoxal phosphate)lysine.

It belongs to the GcvP family. The glycine cleavage system is composed of four proteins: P, T, L and H. The cofactor is pyridoxal 5'-phosphate.

The enzyme catalyses N(6)-[(R)-lipoyl]-L-lysyl-[glycine-cleavage complex H protein] + glycine + H(+) = N(6)-[(R)-S(8)-aminomethyldihydrolipoyl]-L-lysyl-[glycine-cleavage complex H protein] + CO2. The glycine cleavage system catalyzes the degradation of glycine. The P protein binds the alpha-amino group of glycine through its pyridoxal phosphate cofactor; CO(2) is released and the remaining methylamine moiety is then transferred to the lipoamide cofactor of the H protein. This is Glycine dehydrogenase (decarboxylating) 2 (gcvP2) from Pseudomonas putida (strain ATCC 47054 / DSM 6125 / CFBP 8728 / NCIMB 11950 / KT2440).